The primary structure comprises 433 residues: Serine--tRNA ligase (433 aa).

235–237 (TSE) lines the L-serine pocket. 266–268 (RSE) lines the ATP pocket. Glu289 contacts L-serine. Residue 353 to 356 (EISS) participates in ATP binding. L-serine is bound at residue Ser388.

Belongs to the class-II aminoacyl-tRNA synthetase family. Type-1 seryl-tRNA synthetase subfamily. In terms of assembly, homodimer. The tRNA molecule binds across the dimer.

The protein resides in the cytoplasm. The catalysed reaction is tRNA(Ser) + L-serine + ATP = L-seryl-tRNA(Ser) + AMP + diphosphate + H(+). The enzyme catalyses tRNA(Sec) + L-serine + ATP = L-seryl-tRNA(Sec) + AMP + diphosphate + H(+). It participates in aminoacyl-tRNA biosynthesis; selenocysteinyl-tRNA(Sec) biosynthesis; L-seryl-tRNA(Sec) from L-serine and tRNA(Sec): step 1/1. Catalyzes the attachment of serine to tRNA(Ser). Is also able to aminoacylate tRNA(Sec) with serine, to form the misacylated tRNA L-seryl-tRNA(Sec), which will be further converted into selenocysteinyl-tRNA(Sec). This chain is Serine--tRNA ligase, found in Burkholderia orbicola (strain MC0-3).